The chain runs to 444 residues: Methylenetetrahydrofolate--tRNA-(uracil-5-)-methyltransferase TrmFO (444 aa).

10–15 (GAGLAG) lines the FAD pocket.

Belongs to the MnmG family. TrmFO subfamily. Requires FAD as cofactor.

It is found in the cytoplasm. It carries out the reaction uridine(54) in tRNA + (6R)-5,10-methylene-5,6,7,8-tetrahydrofolate + NADH + H(+) = 5-methyluridine(54) in tRNA + (6S)-5,6,7,8-tetrahydrofolate + NAD(+). It catalyses the reaction uridine(54) in tRNA + (6R)-5,10-methylene-5,6,7,8-tetrahydrofolate + NADPH + H(+) = 5-methyluridine(54) in tRNA + (6S)-5,6,7,8-tetrahydrofolate + NADP(+). Functionally, catalyzes the folate-dependent formation of 5-methyl-uridine at position 54 (M-5-U54) in all tRNAs. The chain is Methylenetetrahydrofolate--tRNA-(uracil-5-)-methyltransferase TrmFO from Streptococcus gordonii (strain Challis / ATCC 35105 / BCRC 15272 / CH1 / DL1 / V288).